The sequence spans 75 residues: UPF0291 protein LMOf2365_1322 (75 aa).

A disordered region spans residues 56-75; sequence DPNGTDVTPHKVKQLRKNKH. The segment covering 65–75 has biased composition (basic residues); sequence HKVKQLRKNKH.

It belongs to the UPF0291 family.

Its subcellular location is the cytoplasm. This Listeria monocytogenes serotype 4b (strain F2365) protein is UPF0291 protein LMOf2365_1322.